Reading from the N-terminus, the 371-residue chain is tRNA 2-selenouridine synthase (371 aa).

The 124-residue stretch at 12-135 (FLDDVPMMDM…MRTFLLDTTQ (124 aa)) folds into the Rhodanese domain. Cys95 serves as the catalytic S-selanylcysteine intermediate.

Belongs to the SelU family. In terms of assembly, monomer.

The catalysed reaction is 5-methylaminomethyl-2-thiouridine(34) in tRNA + selenophosphate + (2E)-geranyl diphosphate + H2O + H(+) = 5-methylaminomethyl-2-selenouridine(34) in tRNA + (2E)-thiogeraniol + phosphate + diphosphate. The enzyme catalyses 5-methylaminomethyl-2-thiouridine(34) in tRNA + (2E)-geranyl diphosphate = 5-methylaminomethyl-S-(2E)-geranyl-thiouridine(34) in tRNA + diphosphate. It carries out the reaction 5-methylaminomethyl-S-(2E)-geranyl-thiouridine(34) in tRNA + selenophosphate + H(+) = 5-methylaminomethyl-2-(Se-phospho)selenouridine(34) in tRNA + (2E)-thiogeraniol. It catalyses the reaction 5-methylaminomethyl-2-(Se-phospho)selenouridine(34) in tRNA + H2O = 5-methylaminomethyl-2-selenouridine(34) in tRNA + phosphate. Involved in the post-transcriptional modification of the uridine at the wobble position (U34) of tRNA(Lys), tRNA(Glu) and tRNA(Gln). Catalyzes the conversion of 2-thiouridine (S2U-RNA) to 2-selenouridine (Se2U-RNA). Acts in a two-step process involving geranylation of 2-thiouridine (S2U) to S-geranyl-2-thiouridine (geS2U) and subsequent selenation of the latter derivative to 2-selenouridine (Se2U) in the tRNA chain. The sequence is that of tRNA 2-selenouridine synthase from Pseudomonas entomophila (strain L48).